Here is a 214-residue protein sequence, read N- to C-terminus: MMVDLFSSLDGMTSLWSWLTPMFLSVFMIWNKTWSMDQNNIIKYLAASNWNNSTYNLTKSLLTIMMVLIIFNNLLGMAPFTYGITTSLWVNMTLALLLWGLILLSGYIKSPKKSLAHLAPSGAPLLLLPFLILIESISIMIRPLTLTVRLVANMSAGHIILALMASVLSSNLSNTSLSLSYLIMVGYYLFEFFVCFIQAYIFTLLLSLYMNEHP.

A run of 6 helical transmembrane segments spans residues 9-29 (LDGM…VFMI), 64-84 (IMMV…TYGI), 88-108 (LWVN…SGYI), 121-141 (SGAP…SIMI), 150-170 (LVAN…VLSS), and 182-202 (LIMV…AYIF).

Belongs to the ATPase A chain family. As to quaternary structure, F-type ATPases have 2 components, CF(1) - the catalytic core - and CF(0) - the membrane proton channel. CF(1) has five subunits: alpha(3), beta(3), gamma(1), delta(1), epsilon(1). CF(0) has three main subunits: a, b and c.

The protein localises to the mitochondrion inner membrane. Functionally, mitochondrial membrane ATP synthase (F(1)F(0) ATP synthase or Complex V) produces ATP from ADP in the presence of a proton gradient across the membrane which is generated by electron transport complexes of the respiratory chain. F-type ATPases consist of two structural domains, F(1) - containing the extramembraneous catalytic core and F(0) - containing the membrane proton channel, linked together by a central stalk and a peripheral stalk. During catalysis, ATP synthesis in the catalytic domain of F(1) is coupled via a rotary mechanism of the central stalk subunits to proton translocation. Key component of the proton channel; it may play a direct role in the translocation of protons across the membrane. This is ATP synthase subunit a (ATP6) from Albinaria caerulea (Land snail).